Consider the following 572-residue polypeptide: Urease subunit alpha (572 aa).

Residues 131-572 form the Urease domain; it reads GGIDAHIHFI…LPLAQRYFLF (442 aa). The Ni(2+) site is built by histidine 136, histidine 138, and lysine 219. The residue at position 219 (lysine 219) is an N6-carboxylysine. Histidine 221 contributes to the substrate binding site. Ni(2+) contacts are provided by histidine 248 and histidine 274. The active-site Proton donor is histidine 322. Aspartate 362 provides a ligand contact to Ni(2+).

The protein belongs to the metallo-dependent hydrolases superfamily. Urease alpha subunit family. Heterotrimer of UreA (gamma), UreB (beta) and UreC (alpha) subunits. Three heterotrimers associate to form the active enzyme. It depends on Ni cation as a cofactor. Post-translationally, carboxylation allows a single lysine to coordinate two nickel ions.

Its subcellular location is the cytoplasm. It carries out the reaction urea + 2 H2O + H(+) = hydrogencarbonate + 2 NH4(+). Its pathway is nitrogen metabolism; urea degradation; CO(2) and NH(3) from urea (urease route): step 1/1. This is Urease subunit alpha from Thermosynechococcus vestitus (strain NIES-2133 / IAM M-273 / BP-1).